We begin with the raw amino-acid sequence, 616 residues long: Chaperone protein HscA (616 aa).

The protein belongs to the heat shock protein 70 family.

Functionally, chaperone involved in the maturation of iron-sulfur cluster-containing proteins. Has a low intrinsic ATPase activity which is markedly stimulated by HscB. Involved in the maturation of IscU. The polypeptide is Chaperone protein HscA (Escherichia coli O45:K1 (strain S88 / ExPEC)).